A 290-amino-acid chain; its full sequence is Protein-glutamine deamidase Cif (290 aa).

Residues 1–26 form a disordered region; that stretch reads MKISPNTISPSQSDPRMSTNVSQRSR. Residues cysteine 117, histidine 173, and glutamine 193 contribute to the active site.

The protein belongs to the Cif family.

Its subcellular location is the secreted. It is found in the host nucleus. The catalysed reaction is L-glutaminyl-[protein] + H2O = L-glutamyl-[protein] + NH4(+). Its function is as follows. Protein-glutamine deamidase effector that inhibits the host cell cycle and other key cellular processes such as the actin network and programmed-cell death. Acts by mediating the side chain deamidation of 'Gln-40' of host NEDD8, converting it to glutamate, thereby abolishing the activity of cullin-RING-based E3 ubiquitin-protein ligase complexes (CRL complexes). Inactivation of CRL complexes prevents ubiquitination and subsequent degradation of the cyclin-dependent kinase inhibitors CDKN1A/p21 and CDKN1B/p27, leading to G1 and G2 cell cycle arrests in host cells. Also able to catalyze deamidation of 'Gln-40' of host ubiquitin in vitro; however, NEDD8 constitutes the preferred substrate in vivo. The protein is Protein-glutamine deamidase Cif of Yersinia pseudotuberculosis serotype O:3 (strain YPIII).